A 494-amino-acid chain; its full sequence is BUB3-interacting and GLEBS motif-containing protein ZNF207 (494 aa).

Positions 1-92 are microtubule-binding region; the sequence is MGRKKKKQLK…EGIPEKDMDE (92 aa). C2H2-type zinc fingers lie at residues 11 to 34 and 35 to 58; these read PWCW…KAKH and FKCH…MQVH. Positions 100-111 are enriched in basic and acidic residues; that stretch reads KTQESQKKKQQD. Disordered stretches follow at residues 100–161, 250–377, and 455–494; these read KTQE…PGIP, NRPP…SATS, and LPGA…GGRY. Positions 112–121 are enriched in acidic residues; that stretch reads DSDEYDDDDS. Residues 127-136 show a composition bias toward polar residues; it reads FQPQPVQPQQ. Over residues 142–161 the composition is skewed to pro residues; the sequence is MAQPGLPPVPGAPGMPPGIP. A compositionally biased stretch (low complexity) spans 283–300; that stretch reads SSSTASSNSESLSASSKA. Residues 323 to 332 show a composition bias toward polar residues; the sequence is LNSTPATSTE. Low complexity predominate over residues 342-377; the sequence is TQSTASTTSTTNSTAAKPAASITSKPATLTTTSATS. Residues 375–407 are GLEBS; that stretch reads ATSKLIHPDEDISLEERRAQLPKYQRNLPRPGQ. Over residues 463 to 483 the composition is skewed to pro residues; the sequence is GQGPPMVPPYQGGPPRPPMGM.

Interacts (via GLEBS region) with BUB3.

Its subcellular location is the nucleus. The protein resides in the chromosome. It is found in the centromere. The protein localises to the kinetochore. It localises to the cytoplasm. Its subcellular location is the cytoskeleton. The protein resides in the spindle. In terms of biological role, kinetochore- and microtubule-binding protein that plays a key role in spindle assembly. ZNF207/BuGZ is mainly composed of disordered low-complexity regions and undergoes phase transition or coacervation to form temperature-dependent liquid droplets. Coacervation promotes microtubule bundling and concentrates tubulin, promoting microtubule polymerization and assembly of spindle and spindle matrix by concentrating its building blocks. Also acts as a regulator of mitotic chromosome alignment by mediating the stability and kinetochore loading of BUB3. Mechanisms by which BUB3 is protected are unclear: according to a first report, ZNF207/BuGZ may act by blocking ubiquitination and proteasomal degradation of BUB3. According to another report, the stabilization is independent of the proteasome. This is BUB3-interacting and GLEBS motif-containing protein ZNF207 from Pongo abelii (Sumatran orangutan).